A 909-amino-acid chain; its full sequence is MGPEALSSLLLLLLVASGDADMKGHFDPAKCRYALGMQDRTIPDSDISASSSWSDSTAARHSSDGDGAWCPAGSVFPKEEEYLQVDLQRLHLVALVGTQGRHAGGLGKEFSRSYRLRYSRDGRRWMGWKDRWGQEVISGNEDPEGVVLKDLGPPMVARLVRFYPRADRVMSVCLRVELYGCLWRDGLLSYTAPVGQTMYLSEAVYLNDSTYDGHTVGGLQYGGLGQLADGVVGLDDFRKSQELRVWPGYDYVGWSNHSFSSGYVEMEFEFDRLRAFQAMQVHCNNMHTLGARLPGGVECRFRRGPAMAWEGEPMRHNLGGNLGDPRARAVSVPLGGRVARFLQCRFLFAGPWLLFSEISFISDVVNNSSPALGGTFPPAPWWPPGPPPTNFSSLELEPRGQQPVAKAEGSPTAILIGCLVAIILLLLLIIALMLWRLHWRRLLSKAERRVLEEELTVHLSVPGDTILINNRPGPREPPPYQEPRPRGNPPHSAPCVPNGSALLLSNPAYRLLLATYARPPRGPGPPTPAWAKPTNTQAYSGDYMEPEKPGAPLLPPPPQNSVPHYAEADIVTLQGVTGGNTYAVPALPPGAVGDGPPRVDFPRSRLRFKEKLGEGQFGEVHLCEVDSPQDLVSLDFPLNVRKGHPLLVAVKILRPDATKNARNDFLKEVKIMSRLKDPNIIRLLGVCVQDDPLCMITDYMENGDLNQFLSAHQLEDKAAEGAPGDGQAAQGPTISYPMLLHVAAQIASGMRYLATLNFVHRDLATRNCLVGENFTIKIADFGMSRNLYAGDYYRVQGRAVLPIRWMAWECILMGKFTTASDVWAFGVTLWEVLMLCRAQPFGQLTDEQVIENAGEFFRDQGRQVYLSRPPACPQGLYELMLRCWSRESEQRPPFSQLHRFLAEDALNTV.

The first 18 residues, 1 to 18 (MGPEALSSLLLLLLVASG), serve as a signal peptide directing secretion. At 21–413 (DMKGHFDPAK…VAKAEGSPTA (393 aa)) the chain is on the extracellular side. The F5/8 type C domain occupies 31 to 181 (CRYALGMQDR…VCLRVELYGC (151 aa)). Cystine bridges form between Cys31–Cys181 and Cys70–Cys173. Low complexity predominate over residues 45-60 (SDISASSSWSDSTAAR). The segment at 45 to 65 (SDISASSSWSDSTAARHSSDG) is disordered. Residues 188–363 (LSYTAPVGQT…LFSEISFISD (176 aa)) are DS-like domain. The Ca(2+) site is built by Asn207, Gln226, Asp229, Val231, Tyr249, and Tyr251. N-linked (GlcNAc...) asparagine glycosylation occurs at Asn207. An N-linked (GlcNAc...) asparagine glycan is attached at Asn256. An intrachain disulfide couples Cys299 to Cys344. Ca(2+)-binding residues include Ser356 and Glu357. N-linked (GlcNAc...) asparagine glycans are attached at residues Asn366 and Asn390. Residues 414–434 (ILIGCLVAIILLLLLIIALML) form a helical membrane-spanning segment. The Cytoplasmic portion of the chain corresponds to 435 to 909 (WRLHWRRLLS…FLAEDALNTV (475 aa)). The segment at 466 to 495 (ILINNRPGPREPPPYQEPRPRGNPPHSAPC) is disordered. The segment covering 475–492 (REPPPYQEPRPRGNPPHS) has biased composition (pro residues). A PPxY motif motif is present at residues 477 to 480 (PPPY). Phosphotyrosine; by autocatalysis occurs at positions 480, 509, and 516. The Protein kinase domain maps to 606–901 (LRFKEKLGEG…PPFSQLHRFL (296 aa)). Residue 612 to 620 (LGEGQFGEV) participates in ATP binding. Ser627 is subject to Phosphoserine. Lys651 is a binding site for ATP. Tyr736 is subject to Phosphotyrosine; by autocatalysis. The active-site Proton acceptor is the Asp762. 3 positions are modified to phosphotyrosine; by autocatalysis: Tyr788, Tyr792, and Tyr793.

It belongs to the protein kinase superfamily. Tyr protein kinase family. Insulin receptor subfamily. As to quaternary structure, homodimer. Interacts (via PPxY motif) with WWC1 (via WW domains) in a collagen-regulated manner. Forms a tripartite complex with WWC1 and PRKCZ, but predominantly in the absence of collagen. Interacts (tyrosine phosphorylated) with SHC1. Interacts with SRC. Interacts with MYH9. Interacts with CDH1. Interacts with PTPN11. Interacts with NCK2. Autophosphorylated in response to fibrillar collagen binding.

Its subcellular location is the cell membrane. The catalysed reaction is L-tyrosyl-[protein] + ATP = O-phospho-L-tyrosyl-[protein] + ADP + H(+). Functionally, tyrosine kinase that functions as a cell surface receptor for fibrillar collagen and regulates cell attachment to the extracellular matrix, remodeling of the extracellular matrix, cell migration, differentiation, survival and cell proliferation. Collagen binding triggers a signaling pathway that involves SRC and leads to the activation of MAP kinases. Regulates remodeling of the extracellular matrix by up-regulation of the matrix metalloproteinases MMP2, MMP7 and MMP9, and thereby facilitates cell migration and wound healing. Promotes smooth muscle cell migration, and thereby contributes to arterial wound healing. Also plays a role in tumor cell invasion. Phosphorylates PTPN11. Required for normal blastocyst implantation during pregnancy, for normal mammary gland differentiation and normal lactation. Required for normal ear morphology and normal hearing. This is Epithelial discoidin domain-containing receptor 1 (DDR1) from Pan troglodytes (Chimpanzee).